A 448-amino-acid chain; its full sequence is Histidinol dehydrogenase (448 aa).

NAD(+) contacts are provided by Tyr-136, Gln-197, and Asn-220. The substrate site is built by Ser-243, Gln-265, and His-268. Zn(2+) is bound by residues Gln-265 and His-268. Active-site proton acceptor residues include Glu-333 and His-334. Residues His-334, Asp-367, Glu-421, and His-426 each coordinate substrate. Asp-367 lines the Zn(2+) pocket. Position 426 (His-426) interacts with Zn(2+).

Belongs to the histidinol dehydrogenase family. Requires Zn(2+) as cofactor.

The catalysed reaction is L-histidinol + 2 NAD(+) + H2O = L-histidine + 2 NADH + 3 H(+). It participates in amino-acid biosynthesis; L-histidine biosynthesis; L-histidine from 5-phospho-alpha-D-ribose 1-diphosphate: step 9/9. Its function is as follows. Catalyzes the sequential NAD-dependent oxidations of L-histidinol to L-histidinaldehyde and then to L-histidine. This Pseudomonas savastanoi pv. phaseolicola (strain 1448A / Race 6) (Pseudomonas syringae pv. phaseolicola (strain 1448A / Race 6)) protein is Histidinol dehydrogenase.